A 644-amino-acid polypeptide reads, in one-letter code: Exoribonuclease 2 (644 aa).

The region spanning 189–516 (REDLTALDFV…NHRLLKAVIK (328 aa)) is the RNB domain. The 83-residue stretch at 561 to 643 (DTRFAAEIVD…ETRSIIARPV (83 aa)) folds into the S1 motif domain.

It belongs to the RNR ribonuclease family. RNase II subfamily.

The protein resides in the cytoplasm. The enzyme catalyses Exonucleolytic cleavage in the 3'- to 5'-direction to yield nucleoside 5'-phosphates.. Involved in mRNA degradation. Hydrolyzes single-stranded polyribonucleotides processively in the 3' to 5' direction. This chain is Exoribonuclease 2, found in Escherichia coli O127:H6 (strain E2348/69 / EPEC).